The following is a 233-amino-acid chain: MQQLNKISYLNQIQSQQFDVELMSEEVGFTLDQLMELAGQSIANTVVQLNKEGKSYNKILVLCGPGNNGGDGIVSARHLKQFGLQPEIALFREVKNPFFNRLLNQCKYNLIPIHYELQDLEKYDLLIDAILGFSFKPPLREPYDKPIQQLKTTKTPILSVDIPSGWDVEQGNAQDFFTPQYLISLTLPKLGVKSFKGRHFIGGRFIPLKLQEKYNFIVPEYQGSDTILELSNL.

Residues Ser15–Val218 form the YjeF N-terminal domain. Asn67–Asp71 provides a ligand contact to (6S)-NADPHX. Positions 68 and 128 each coordinate K(+). Residues Gly132–Pro138, Tyr143, and Asp161 each bind (6S)-NADPHX. Ser164 provides a ligand contact to K(+).

This sequence belongs to the NnrE/AIBP family. K(+) is required as a cofactor.

The catalysed reaction is (6R)-NADHX = (6S)-NADHX. It carries out the reaction (6R)-NADPHX = (6S)-NADPHX. In terms of biological role, catalyzes the epimerization of the S- and R-forms of NAD(P)HX, a damaged form of NAD(P)H that is a result of enzymatic or heat-dependent hydration. This is a prerequisite for the S-specific NAD(P)H-hydrate dehydratase to allow the repair of both epimers of NAD(P)HX. The protein is NAD(P)H-hydrate epimerase of Paramecium tetraurelia.